A 365-amino-acid chain; its full sequence is MAGVWAPEHSVEAHSNQSSAADGCGSVSVAFPITMMVTGFVGNALAMLLVVRSYRRRESKRKKSFLLCIGWLALTDLVGQLLTSPVVILVYLSQRRWEQLDPSGRLCTFFGLTMTVFGLSSLLVASAMAVERALAIRAPHWYASHMKTRATPVLLGVWLSVLAFALLPVLGVGRYSVQWPGTWCFISTGPAGNETDSAREPGSVAFASAFACLGLLALVVTFACNLATIKALVSRCRAKAAASQSSAQWGRITTETAIQLMGIMCVLSVCWSPLLIMMLKMIFNQMSVEQCKTQMGKEKECNSFLIAVRLASLNQILDPWVYLLLRKILLRKFCQIRDHTNYASSSTSLPCPGSSVLMWSDQLER.

The Extracellular segment spans residues 1-30 (MAGVWAPEHSVEAHSNQSSAADGCGSVSVA). Residue Asn-16 is glycosylated (N-linked (GlcNAc...) asparagine). A helical membrane pass occupies residues 31–55 (FPITMMVTGFVGNALAMLLVVRSYR). At 56-68 (RRESKRKKSFLLC) the chain is on the cytoplasmic side. The chain crosses the membrane as a helical span at residues 69–89 (IGWLALTDLVGQLLTSPVVIL). Residues 90–108 (VYLSQRRWEQLDPSGRLCT) are Extracellular-facing. A disulfide bridge links Cys-107 with Cys-184. A helical membrane pass occupies residues 109–130 (FFGLTMTVFGLSSLLVASAMAV). The Cytoplasmic portion of the chain corresponds to 131–151 (ERALAIRAPHWYASHMKTRAT). Residues 152–173 (PVLLGVWLSVLAFALLPVLGVG) form a helical membrane-spanning segment. The Extracellular portion of the chain corresponds to 174–203 (RYSVQWPGTWCFISTGPAGNETDSAREPGS). N-linked (GlcNAc...) asparagine glycosylation occurs at Asn-193. A helical transmembrane segment spans residues 204-229 (VAFASAFACLGLLALVVTFACNLATI). At 230–259 (KALVSRCRAKAAASQSSAQWGRITTETAIQ) the chain is on the cytoplasmic side. The helical transmembrane segment at 260–283 (LMGIMCVLSVCWSPLLIMMLKMIF) threads the bilayer. Residues 284–303 (NQMSVEQCKTQMGKEKECNS) lie on the Extracellular side of the membrane. A helical transmembrane segment spans residues 304 to 325 (FLIAVRLASLNQILDPWVYLLL). The Cytoplasmic segment spans residues 326–365 (RKILLRKFCQIRDHTNYASSSTSLPCPGSSVLMWSDQLER).

Belongs to the G-protein coupled receptor 1 family. Interacts (via C-terminus) with MKLN1. As to quaternary structure, does not interact with MKLN1. As to expression, principally expressed in the tubules of the renal medulla. Specific expression is seen in medullary and cortical thick ascending limbs; lower levels are detected in cortical and inner medullary collecting ducts. Not detected significantly in the glomeruli. In the brain, expressed in all types of glial cells.

It is found in the cell membrane. In terms of biological role, receptor for prostaglandin E2 (PGE2). Required for normal development of fever in response to pyrinogens, including IL1B, prostaglandin E2 and bacterial lipopolysaccharide (LPS). Required for normal potentiation of platelet aggregation by prostaglandin E2, and thus plays a role in the regulation of blood coagulation. Required for increased HCO3(-) secretion in the duodenum in response to mucosal acidification, and thereby contributes to the protection of the mucosa against acid-induced ulceration. Not required for normal kidney function, normal urine volume and osmolality. Receptor for prostaglandin E2 (PGE2); ligand binding activates a signaling cascade via G(i) proteins that leads to the inhibition of adenylate cyclase. Its function is as follows. Receptor for prostaglandin E2 (PGE2); ligand binding can activate several distinct signaling cascades, resulting in activation or inhibition of adenylate cyclase. In Rattus norvegicus (Rat), this protein is Prostaglandin E2 receptor EP3 subtype (Ptger3).